The chain runs to 1200 residues: uncharacterized protein (1200 aa).

Disordered stretches follow at residues 282 to 302 (SQES…GCTS), 323 to 372 (LSEA…PQGS), 392 to 491 (SQEP…KASL), 510 to 568 (RAKS…RIGA), and 1056 to 1200 (SCPE…LASL). Low complexity predominate over residues 420–435 (ASSPRLSPASPAAAAS). Residues 437–448 (TKIEVKTKERNG) are compositionally biased toward basic and acidic residues. Residues 518 to 527 (GTTQTKTSGP) are compositionally biased toward polar residues. Residues 1137–1153 (EDGKGSHKLPDPAREHL) are compositionally biased toward basic and acidic residues. Residues 1160–1171 (RQQPPRQSQVPR) are compositionally biased toward low complexity. Positions 1175–1200 (GSFSSEGTDSQTSLEDSPQTSPLASL) are enriched in polar residues.

This is an uncharacterized protein from Homo sapiens (Human).